Reading from the N-terminus, the 72-residue chain is Putative beta-neurotoxin (72 aa).

An N-terminal signal peptide occupies residues 1 to 7 (IDMVVEC). The region spanning 9-71 (KDGYLMEHDG…TWSRATNRCG (63 aa)) is the LCN-type CS-alpha/beta domain. 4 cysteine pairs are disulfide-bonded: cysteine 19/cysteine 70, cysteine 23/cysteine 45, cysteine 31/cysteine 51, and cysteine 35/cysteine 53.

In terms of tissue distribution, expressed by the venom gland.

Its subcellular location is the secreted. In terms of biological role, beta toxins bind voltage-independently at site-4 of sodium channels (Nav) and shift the voltage of activation toward more negative potentials thereby affecting sodium channel activation and promoting spontaneous and repetitive firing. The chain is Putative beta-neurotoxin from Tityus pachyurus (Colombian scorpion).